We begin with the raw amino-acid sequence, 190 residues long: Guanylate kinase (190 aa).

The region spanning 3-185 (NYIFIISAPS…SLEQLCKYFE (183 aa)) is the Guanylate kinase-like domain. Position 10-17 (10-17 (APSGAGKS)) interacts with ATP.

Belongs to the guanylate kinase family.

The protein resides in the cytoplasm. It catalyses the reaction GMP + ATP = GDP + ADP. Functionally, essential for recycling GMP and indirectly, cGMP. The protein is Guanylate kinase of Francisella tularensis subsp. holarctica (strain OSU18).